The chain runs to 274 residues: Diaminopimelate epimerase (274 aa).

Residues Asn-11, Gln-44, and Asn-64 each coordinate substrate. The active-site Proton donor is Cys-73. Substrate is bound by residues 74-75 (GN), Asn-157, Asn-190, and 208-209 (ER). Catalysis depends on Cys-217, which acts as the Proton acceptor. A substrate-binding site is contributed by 218–219 (GS).

The protein belongs to the diaminopimelate epimerase family. In terms of assembly, homodimer.

It localises to the cytoplasm. It carries out the reaction (2S,6S)-2,6-diaminopimelate = meso-2,6-diaminopimelate. Its pathway is amino-acid biosynthesis; L-lysine biosynthesis via DAP pathway; DL-2,6-diaminopimelate from LL-2,6-diaminopimelate: step 1/1. Catalyzes the stereoinversion of LL-2,6-diaminopimelate (L,L-DAP) to meso-diaminopimelate (meso-DAP), a precursor of L-lysine and an essential component of the bacterial peptidoglycan. The polypeptide is Diaminopimelate epimerase (Pectobacterium carotovorum subsp. carotovorum (strain PC1)).